Consider the following 485-residue polypeptide: Ribosomal protein S6 kinase beta-2 (485 aa).

The interval 1–26 is disordered; it reads MAAVFDLDLETEEGSEGEGEPEFSPA. A compositionally biased stretch (acidic residues) spans 7-21; that stretch reads LDLETEEGSEGEGEP. Residue Ser15 is modified to Phosphoserine. Positions 67–328 constitute a Protein kinase domain; the sequence is FELLSVLGKG…AADVQRHPFF (262 aa). Residues 73 to 81 and Lys99 contribute to the ATP site; that span reads LGKGGYGKV. Residue Asp194 is the Proton acceptor of the active site. The 71-residue stretch at 329-399 folds into the AGC-kinase C-terminal domain; it reads RHINWDDLLA…VAPSVLDSIK (71 aa). Residues 407 to 485 form a disordered region; the sequence is KLRSPRRLNS…SKKGRGRSGR (79 aa). Ser417 is subject to Phosphoserine. The residue at position 420 (Thr420) is a Phosphothreonine. The residue at position 423 (Ser423) is a Phosphoserine. The segment covering 436 to 469 has biased composition (pro residues); the sequence is SPGPPEPMEPSLPPLLPSPPSPPPTSTAPLPIRP. The Nuclear localization signal signature appears at 474–480; the sequence is KKSKKGR. Residues 474–485 are compositionally biased toward basic residues; that stretch reads KKSKKGRGRSGR. Ser476 carries the post-translational modification Phosphoserine; by PKC.

It belongs to the protein kinase superfamily. AGC Ser/Thr protein kinase family. S6 kinase subfamily. In terms of processing, phosphorylated and activated by MTOR. Phosphorylation by PKC within the NLS in response to mitogenic stimuli causes cytoplasmic retention.

The protein localises to the cytoplasm. It localises to the nucleus. The enzyme catalyses L-seryl-[protein] + ATP = O-phospho-L-seryl-[protein] + ADP + H(+). The catalysed reaction is L-threonyl-[protein] + ATP = O-phospho-L-threonyl-[protein] + ADP + H(+). Its function is as follows. Phosphorylates specifically ribosomal protein S6. Seems to act downstream of mTOR signaling in response to growth factors and nutrients to promote cell proliferation, cell growth and cell cycle progression in an alternative pathway regulated by MEAK7. The polypeptide is Ribosomal protein S6 kinase beta-2 (Rps6kb2) (Mus musculus (Mouse)).